A 53-amino-acid chain; its full sequence is Large ribosomal subunit protein eL40 (53 aa).

It belongs to the eukaryotic ribosomal protein eL40 family.

The chain is Large ribosomal subunit protein eL40 from Pyrobaculum neutrophilum (strain DSM 2338 / JCM 9278 / NBRC 100436 / V24Sta) (Thermoproteus neutrophilus).